Here is a 307-residue protein sequence, read N- to C-terminus: Membrane protein insertase YidC 1 (307 aa).

The first 22 residues, 1 to 22 (MKSKKGLTLTITLGTLALFLSG), serve as a signal peptide directing secretion. Residue Cys-23 is the site of N-palmitoyl cysteine attachment. Cys-23 is lipidated: S-diacylglycerol cysteine. 5 helical membrane-spanning segments follow: residues 59 to 79 (YGWAIIGLTVIVRLVLLPMMI), 136 to 156 (GIGCLPLLIQLPIFSALYYAI), 177 to 197 (LILAILAFLSYLAQGYLSMIG), 205 to 225 (TMRLMLIMSPVMILFVSMSAP), and 226 to 246 (AGLGLYFFVGGLFACLQTLII). The segment at 260–307 (ELKKHPIKTPTPTQPKPINATESKPSHPRPQNNAGRGRNAGKQQRHHK) is disordered.

Belongs to the OXA1/ALB3/YidC family. Type 2 subfamily.

It is found in the cell membrane. In terms of biological role, required for the insertion and/or proper folding and/or complex formation of integral membrane proteins into the membrane. Involved in integration of membrane proteins that insert both dependently and independently of the Sec translocase complex, as well as at least some lipoproteins. The protein is Membrane protein insertase YidC 1 of Lactiplantibacillus plantarum (strain ATCC BAA-793 / NCIMB 8826 / WCFS1) (Lactobacillus plantarum).